The chain runs to 119 residues: Holo-[acyl-carrier-protein] synthase (119 aa).

Mg(2+)-binding residues include Asp-7 and Glu-53.

It belongs to the P-Pant transferase superfamily. AcpS family. Requires Mg(2+) as cofactor.

The protein localises to the cytoplasm. The catalysed reaction is apo-[ACP] + CoA = holo-[ACP] + adenosine 3',5'-bisphosphate + H(+). In terms of biological role, transfers the 4'-phosphopantetheine moiety from coenzyme A to a Ser of acyl-carrier-protein. The sequence is that of Holo-[acyl-carrier-protein] synthase from Dehalococcoides mccartyi (strain ATCC BAA-2266 / KCTC 15142 / 195) (Dehalococcoides ethenogenes (strain 195)).